Reading from the N-terminus, the 206-residue chain is Large ribosomal subunit protein uL22m (206 aa).

Residues 1-40 constitute a mitochondrion transit peptide; that stretch reads MAAAVLGQLGALWIHNLRSRGRLAWGVLPQSYVHTSASLD.

This sequence belongs to the universal ribosomal protein uL22 family. In terms of assembly, component of the mitochondrial ribosome large subunit (39S) which comprises a 16S rRNA and about 50 distinct proteins.

It localises to the mitochondrion. The protein is Large ribosomal subunit protein uL22m (MRPL22) of Pongo abelii (Sumatran orangutan).